The following is a 1080-amino-acid chain: MLHKRASEANDKNDNTIIGSDLASSKKRRIDFTESSSDKSSSILASGSSRGFHGDSVVQQIDMAFGNSNRQEIDEDLHSRQLAVYGRETMRRLFASNVLISGMHGLGAEIAKNLILAGVKSVTLHDERVVELWDLSSNFVFSEDDVGKNRADASVQKLQDLNNAVVVSSLTKSLNKEDLSGFQVVVFSDISMERAIEFDDYCHSHQPPIAFVKADVRGLFGSVFCDFGPEFAVLDVDGEEPHTGIIASISNENQAFISCVDDERLEFEDGDLVVFSEVEGMTELNDGKPRKIKSTRPYSFTLDEDTTNYGTYVKGGIVTQVKQPKLLNFKPLREALKDPGDFLFSDFSKFDRPPLLHLAFQALDHFKAEAGRFPVAGSEEDAQKLISIATAINTGQGDLKVENVDQKLLRHFSFGAKAVLNPMAAMFGGIVGQEVVKACSGKFHPLFQFFYFDSVESLPSEPVDSSDFAPRNSRYDAQISVFGAKFQKKLEDAKVFTVGSGALGCEFLKNLALMGVSCGSQGKLTVTDDDIIEKSNLSRQFLFRDWNIGQAKSTVAASAAAVINPRFNIEALQNRVGAETENVFDDAFWENLTVVVNALDNVNARLYVDSRCLYFQKPLLESGTLGTKCNTQSVIPHLTENYGASRDPPEKQAPMCTVHSFPHNIDHCLTWARSEFEGLLEKTPAEVNAYLSSPVEYTNSMMSAGDAQARDTLERIVECLEKEKCETFQDCLTWARLRFEDYFVNRVKQLIYTFPEDAATSTGAPFWSAPKRFPRPLQYSSSDPSLLNFITATAILRAETFGIPIPEWTKNPKEAAEAVDRVIVPDFEPRQDAKIVTDEKATTLTTASVDDAAVIDDLIAKIDQCRHNLSPDFRMKPIQFEKDDDTNYHMDVIAGLANMRARNYSIPEVDKLKAKFIAGRIIPAIATSTAMATGLVCLELYKVLDGGHKVEAYRNTFANLALPLFSMAEPLPPKVVKHRDMAWTVWDRWVLKGNPTLREVLQWLEDKGLSAYSISCGSCLLFNSMFTRHKERMDKKVVDLARDVAKVELPPYRNHLDVVVACEDEDDNDVDIPLVSIYFR.

Residues 1-14 (MLHKRASEANDKND) are compositionally biased toward basic and acidic residues. Disordered stretches follow at residues 1–20 (MLHK…IIGS) and 29–50 (RIDF…GSSR). Residues 38 to 49 (DKSSSILASGSS) are compositionally biased toward low complexity. Residues A502, D528, R539, K552, and 600 to 601 (DN) each bind ATP. The active-site Glycyl thioester intermediate is the C656.

Belongs to the ubiquitin-activating E1 family. As to quaternary structure, monomer. Expressed in leaves, flowers, roots and stems. Detected in germinating seeds, cotyledons, hypocotyls, vascular tissues, anthers, filaments, pollen, style, stigma, sepals, petals, ovary, developing ovules, funiculi and silique walls.

The catalysed reaction is ATP + ubiquitin + [E1 ubiquitin-activating enzyme]-L-cysteine = AMP + diphosphate + S-ubiquitinyl-[E1 ubiquitin-activating enzyme]-L-cysteine.. It functions in the pathway protein modification; protein ubiquitination. Activates ubiquitin by first adenylating its C-terminal glycine residue with ATP, and thereafter linking this residue to the side chain of a cysteine residue in E1, yielding a ubiquitin-E1 thioester and free AMP. The protein is Ubiquitin-activating enzyme E1 1 (UBA1) of Arabidopsis thaliana (Mouse-ear cress).